Consider the following 94-residue polypeptide: Signal peptidase complex subunit 1 (94 aa).

Residue Ser-2 is modified to N-acetylserine. Residues 2-28 (SEILQDVQRKLVFPIDFPSQRKTEKFQ) lie on the Cytoplasmic side of the membrane. Residues 29–49 (QLSLMIGALVACILGFAQQSL) traverse the membrane as a helical segment. Position 50 (Lys-50) is a topological domain, lumenal. The chain crosses the membrane as a helical span at residues 51 to 71 (VLLTAYGISCVITLICVLPAY). Topologically, residues 72 to 94 (PWYNKQKLRWAQPKIEINVDQYD) are cytoplasmic.

It belongs to the SPCS1 family. In terms of assembly, component of the signal peptidase complex (SPC) composed of a catalytic subunit SEC11 and three accessory subunits SPC1, SPC2 and SPC3. The complex induces a local thinning of the ER membrane which is used to measure the length of the signal peptide (SP) h-region of protein substrates. This ensures the selectivity of the complex towards h-regions shorter than 18-20 amino acids. SPC associates with the translocon complex. Interacts with SBH1 and SEB2/SBH2.

Its subcellular location is the endoplasmic reticulum membrane. Component of the signal peptidase complex (SPC) which catalyzes the cleavage of N-terminal signal sequences from nascent proteins as they are translocated into the lumen of the endoplasmic reticulum. Dispensable for SPC enzymatic activity. The sequence is that of Signal peptidase complex subunit 1 (SPC1) from Saccharomyces cerevisiae (strain ATCC 204508 / S288c) (Baker's yeast).